The following is a 749-amino-acid chain: MTSKPSTSDGRAHSISHVPGTHMRGTSASHSPRPFRPCADCTCSPGLLSRQGRRASLFLRQLENSRRSSSMLLNELKGAGGGSSAGNGSVYSCDSLCAVNREVNTTDRLLKLRQEMKKHDLCCYIVPSCDEHQSEYVSLRDQRRAFISGFSGSAGVACITRDLLNFNDDHPDGKSILSTDGRYFNQARQELDYNWTLLRQNEDPITWQEWCVREALEMAKGLGNKEGMVLKIGIDPKLITFNDYVSFRKMIDTKYDAKGKVELVPVEENLVDSIWPDFETLPERPCNDLLLLKYEFHGEEFKDKKEKLLKKLNDKASSATTGRNTFIVVALDEICWLLNLRGSDIDYNPVFFSYVAINEDETILFTNNPFNDDISEYFKINGIEVRPYEQIWEHLTKITSQASSAEHEFLIPDSASWQMVRCLNTSTNANGAIAKKMTAQNFAIIHSPIDVLKSIKNDIEIKNAHKAQVKDAVCLVQYFAWLEQQLVGREALIDEYRAAEKLTEIRKTQRNFMGNSFETISSTGSNAAIIHYSPPVENSSMIDPTKIYLCDSGSQFLEGTTDITRTIHLTKPTKEEMDNYTLVLKGGLALERLIFPENTPGFNIDAIARQFLWSRGLDYKHGTGHGIGSFLNVHEGPMGVGFRPHLMNFPLRAGNIISNEPGYYKDGEYGIRIESDMLIKKATEKGNFLKFENMTVVPYCRKLINTKLLNEEEKTQINEYHARVWRTIVHFLQPQSISYKWLKRETSPL.

The segment at 1–33 is disordered; sequence MTSKPSTSDGRAHSISHVPGTHMRGTSASHSPR. Phosphoserine is present on residues S69, S92, and S95. D551, D562, E660, and E674 together coordinate Mn(2+).

This sequence belongs to the peptidase M24B family. Homodimer. Interacts with FRA2. It depends on Mn(2+) as a cofactor.

Its subcellular location is the cytoplasm. The enzyme catalyses Release of any N-terminal amino acid, including proline, that is linked to proline, even from a dipeptide or tripeptide.. In terms of biological role, involved in the regulation of the iron regulon in responss to decreased mitochondrial iron-sulfur cluster synthesis. The polypeptide is Putative Xaa-Pro aminopeptidase FRA1 (FRA1) (Saccharomyces cerevisiae (strain ATCC 204508 / S288c) (Baker's yeast)).